Reading from the N-terminus, the 304-residue chain is Acetyl-coenzyme A carboxylase carboxyl transferase subunit beta (304 aa).

The 270-residue stretch at 25-294 (VWTKCDSCGQ…PSVVESKADT (270 aa)) folds into the CoA carboxyltransferase N-terminal domain. Zn(2+) is bound by residues Cys29, Cys32, Cys48, and Cys51. The C4-type zinc-finger motif lies at 29–51 (CDSCGQVLYRAELERNLEVCPKC).

It belongs to the AccD/PCCB family. As to quaternary structure, acetyl-CoA carboxylase is a heterohexamer composed of biotin carboxyl carrier protein (AccB), biotin carboxylase (AccC) and two subunits each of ACCase subunit alpha (AccA) and ACCase subunit beta (AccD). Requires Zn(2+) as cofactor.

It is found in the cytoplasm. The catalysed reaction is N(6)-carboxybiotinyl-L-lysyl-[protein] + acetyl-CoA = N(6)-biotinyl-L-lysyl-[protein] + malonyl-CoA. It functions in the pathway lipid metabolism; malonyl-CoA biosynthesis; malonyl-CoA from acetyl-CoA: step 1/1. In terms of biological role, component of the acetyl coenzyme A carboxylase (ACC) complex. Biotin carboxylase (BC) catalyzes the carboxylation of biotin on its carrier protein (BCCP) and then the CO(2) group is transferred by the transcarboxylase to acetyl-CoA to form malonyl-CoA. The polypeptide is Acetyl-coenzyme A carboxylase carboxyl transferase subunit beta (Yersinia pseudotuberculosis serotype O:1b (strain IP 31758)).